A 529-amino-acid polypeptide reads, in one-letter code: Glucose-6-phosphate isomerase (529 aa).

Glu322 functions as the Proton donor in the catalytic mechanism. Residues His351 and Lys455 contribute to the active site.

It belongs to the GPI family.

It localises to the cytoplasm. It catalyses the reaction alpha-D-glucose 6-phosphate = beta-D-fructose 6-phosphate. It participates in carbohydrate biosynthesis; gluconeogenesis. It functions in the pathway carbohydrate degradation; glycolysis; D-glyceraldehyde 3-phosphate and glycerone phosphate from D-glucose: step 2/4. Catalyzes the reversible isomerization of glucose-6-phosphate to fructose-6-phosphate. The chain is Glucose-6-phosphate isomerase from Acaryochloris marina (strain MBIC 11017).